We begin with the raw amino-acid sequence, 169 residues long: Lachrymatory-factor synthase (169 aa).

The propeptide occupies 1-12; the sequence is MELNPGAPAVVA. Catalysis depends on proton donor/acceptor residues Glu88 and Tyr102.

The protein resides in the vacuole. It carries out the reaction (E)-prop-1-en-1-SO-peroxol = (Z)-propanethial S-oxide. It catalyses the reaction (E)-alk-1-en-1-SO-peroxol = (Z)-alkanethial oxide. Functionally, produces lacrymatory factor (propanthial S-oxide) from 1-propenylsulphenic acid, an unstable compound resulting from the degradation of trans-1-propenyl-L-cysteine sulphoxide (PRENCSO) by alliinase. The polypeptide is Lachrymatory-factor synthase (Allium cepa (Onion)).